Consider the following 1014-residue polypeptide: Collagen alpha-1(I) chain (1014 aa).

The interval 1–1014 is disordered; that stretch reads SYGYDEKGGI…PGPPGPPGPP (1014 aa). Low complexity predominate over residues 9 to 22; the sequence is GISVPGPMGPSGPR. A 4-hydroxyproline mark is found at proline 25, proline 28, proline 30, proline 39, proline 42, proline 45, proline 60, proline 75, proline 81, proline 90, and proline 96. Residues 33–51 show a composition bias toward low complexity; it reads QGFQGPPGEPGEPGSSGPM. Basic and acidic residues predominate over residues 63-77; it reads NGDDGEAGKPGRPGE. Lysine 99 is modified (5-hydroxylysine; alternate). Lysine 99 carries O-linked (Gal...) hydroxylysine; alternate glycosylation. Phosphoserine is present on serine 105. Residues 113 to 129 show a composition bias toward low complexity; sequence DAGPAGPKGEPGSPGEN. 4-hydroxyproline occurs at positions 123, 126, 132, 141, 147, 168, 177, 180, 207, 210, 222, 228, 237, 243, 246, and 261. Low complexity predominate over residues 147-165; it reads PGASGPAGARGNDGATGAA. Residues 167 to 179 show a composition bias toward pro residues; the sequence is PPGPTGPAGPPGF. Residues 213–252 are compositionally biased toward low complexity; sequence AGAAGPAGNPGADGQPGAKGANGAPGIAGAPGFPGARGPS. Residue lysine 264 is modified to 5-hydroxylysine. 8 positions are modified to 4-hydroxyproline: proline 270, proline 273, proline 285, proline 294, proline 309, proline 315, proline 324, and proline 330. Positions 319–328 are enriched in gly residues; the sequence is GERGGPGSRG. The residue at position 339 (lysine 339) is a 5-hydroxylysine. Residues proline 348, proline 357, proline 363, proline 369, proline 378, proline 381, proline 390, proline 399, proline 405, proline 417, proline 426, proline 435, proline 438, proline 456, proline 473, proline 479, proline 485, proline 491, proline 497, proline 503, proline 515, proline 524, proline 535, proline 548, proline 554, and proline 563 each carry the 4-hydroxyproline modification. The segment covering 372–398 has biased composition (low complexity); that stretch reads KGLTGSPGSPGPDGKTGPPGPAGQDGR. Residues 407–426 show a composition bias toward low complexity; it reads ARGQAGVMGFPGPKGAAGEP. A compositionally biased stretch (low complexity) spans 485–494; the sequence is PGEAGKPGEQ. Position 575 is a 5-hydroxylysine (lysine 575). 4-hydroxyproline is present on residues proline 581, proline 596, and proline 602. Residues 608–622 are compositionally biased toward low complexity; it reads SGPSGPAGPTGARGA. Serine 611 bears the Phosphoserine mark. Proline 623, proline 629, proline 632, proline 641, proline 647, proline 674, and proline 683 each carry 4-hydroxyproline. The span at 635 to 665 shows a compositional bias: low complexity; sequence AGFAGPPGADGQPGAKGEPGDAGAKGDAGPS. A 5-hydroxylysine modification is found at lysine 686. The span at 691 to 707 shows a compositional bias: low complexity; it reads SAGPPGATGFPGAAGRV. 4-hydroxyproline is present on residues proline 695 and proline 701. 3-hydroxyproline is present on proline 709. 16 positions are modified to 4-hydroxyproline: proline 710, proline 719, proline 722, proline 743, proline 752, proline 760, proline 769, proline 787, proline 796, proline 799, proline 805, proline 820, proline 826, proline 832, proline 841, and proline 847. The segment covering 736-745 has biased composition (low complexity); that stretch reads ETGPAGRPGE. A compositionally biased stretch (low complexity) spans 757–769; sequence KGSPGADGPAGAP. The segment covering 819–829 has biased composition (pro residues); the sequence is PPGPVGPPGLA. Lysine 856 is modified (5-hydroxylysine). Over residues 864–879 the composition is skewed to pro residues; the sequence is PGPPGAPGAPGAPGPV. A 4-hydroxyproline mark is found at proline 867, proline 870, and proline 873. A compositionally biased stretch (low complexity) spans 900–914; sequence AGPAGARGPAGPQGP. Residues 915–929 are compositionally biased toward basic and acidic residues; the sequence is RGDKGETGEQGDRGI. Lysine 918 carries the post-translational modification 5-hydroxylysine. Residue lysine 930 is modified to 5-hydroxylysine; alternate. O-linked (Gal...) hydroxylysine; alternate glycosylation occurs at lysine 930. Residues proline 945, proline 948, proline 966, and proline 981 each carry the 4-hydroxyproline modification. Over residues 948-981 the composition is skewed to low complexity; the sequence is PGEQGPSGASGPAGPRGPPGSAGSPGKDGLNGLP. A 3-hydroxyproline modification is found at proline 986. 4-hydroxyproline is present on proline 987. Residues 999 to 1014 are compositionally biased toward pro residues; the sequence is VGPPGPPGPPGPPGPP. A 3-hydroxyproline modification is found at proline 1001. The residue at position 1002 (proline 1002) is a 4-hydroxyproline. Proline 1004 is modified (3-hydroxyproline). Proline 1005 carries the 4-hydroxyproline modification. At proline 1007 the chain carries 3-hydroxyproline. 4-hydroxyproline occurs at positions 1008, 1011, and 1014.

The protein belongs to the fibrillar collagen family. In terms of assembly, trimers of one alpha 2(I) and two alpha 1(I) chains. Contains mostly 4-hydroxyproline. Proline residues at the third position of the tripeptide repeating unit (G-X-Y) are hydroxylated in some or all of the chains. In terms of processing, contains 3-hydroxyproline at a few sites. This modification occurs on the first proline residue in the sequence motif Gly-Pro-Hyp, where Hyp is 4-hydroxyproline. Post-translationally, lysine residues at the third position of the tripeptide repeating unit (G-X-Y) are 5-hydroxylated in some or all of the chains. O-glycosylated on hydroxylated lysine residues. The O-linked glycan consists of a Glc-Gal disaccharide. As to expression, expressed in bones.

Its subcellular location is the secreted. The protein resides in the extracellular space. It localises to the extracellular matrix. Type I collagen is a member of group I collagen (fibrillar forming collagen). In Megatherium americanum (Giant ground sloth), this protein is Collagen alpha-1(I) chain.